Here is a 525-residue protein sequence, read N- to C-terminus: Squalene epoxidase 3 (525 aa).

The chain crosses the membrane as a helical span at residues His9 to Leu29. FAD contacts are provided by residues Val64–Ala65, Glu84–Arg85, Arg92, Arg163, Val179, Asp341, and Met354. 2 helical membrane passes run Leu452–Pro472 and Leu477–Ala497.

It belongs to the squalene monooxygenase family. It depends on FAD as a cofactor. Expressed in seedlings, leaves, stems, inflorescences and siliques.

Its subcellular location is the membrane. It carries out the reaction squalene + reduced [NADPH--hemoprotein reductase] + O2 = (S)-2,3-epoxysqualene + oxidized [NADPH--hemoprotein reductase] + H2O + H(+). It functions in the pathway terpene metabolism; lanosterol biosynthesis; lanosterol from farnesyl diphosphate: step 2/3. In terms of biological role, catalyzes the stereospecific oxidation of squalene to (S)-2,3-epoxysqualene, and is considered to be a rate-limiting enzyme in steroid biosynthesis. Can produce not only oxidosqualene, but also 2,3:22,23-dioxidosqualene. This chain is Squalene epoxidase 3 (SQE3), found in Arabidopsis thaliana (Mouse-ear cress).